Consider the following 195-residue polypeptide: Ribonuclease HII (195 aa).

The RNase H type-2 domain occupies 8–195 (WGVVGVDEAG…FAPVRRLLGG (188 aa)). The a divalent metal cation site is built by aspartate 14, glutamate 15, and aspartate 106.

The protein belongs to the RNase HII family. Mn(2+) serves as cofactor. The cofactor is Mg(2+).

It localises to the cytoplasm. It carries out the reaction Endonucleolytic cleavage to 5'-phosphomonoester.. Endonuclease that specifically degrades the RNA of RNA-DNA hybrids. The chain is Ribonuclease HII from Halorhodospira halophila (strain DSM 244 / SL1) (Ectothiorhodospira halophila (strain DSM 244 / SL1)).